A 226-amino-acid polypeptide reads, in one-letter code: Ribonuclease 3 (226 aa).

The 123-residue stretch at 6–128 (IQKLQKILGY…LIGSIFLDSN (123 aa)) folds into the RNase III domain. Glu-41 is a binding site for Mg(2+). Asp-45 is a catalytic residue. Mg(2+) contacts are provided by Asn-114 and Glu-117. The active site involves Glu-117. Residues 155 to 225 (DPKTRLQEYL…AQNALIKLGI (71 aa)) form the DRBM domain.

This sequence belongs to the ribonuclease III family. In terms of assembly, homodimer. It depends on Mg(2+) as a cofactor.

It localises to the cytoplasm. It catalyses the reaction Endonucleolytic cleavage to 5'-phosphomonoester.. In terms of biological role, digests double-stranded RNA. Involved in the processing of primary rRNA transcript to yield the immediate precursors to the large and small rRNAs (23S and 16S). Processes some mRNAs, and tRNAs when they are encoded in the rRNA operon. Processes pre-crRNA and tracrRNA of type II CRISPR loci if present in the organism. This is Ribonuclease 3 from Buchnera aphidicola subsp. Baizongia pistaciae (strain Bp).